The primary structure comprises 806 residues: Leucine--tRNA ligase (806 aa).

The short motif at 40–51 (PYPSGAGLHVGH) is the 'HIGH' region element. The short motif at 578–582 (KMSKS) is the 'KMSKS' region element. Lys581 provides a ligand contact to ATP.

It belongs to the class-I aminoacyl-tRNA synthetase family.

The protein resides in the cytoplasm. It carries out the reaction tRNA(Leu) + L-leucine + ATP = L-leucyl-tRNA(Leu) + AMP + diphosphate. This chain is Leucine--tRNA ligase, found in Staphylococcus aureus (strain MSSA476).